A 673-amino-acid chain; its full sequence is F-box/LRR-repeat protein 17 (673 aa).

The segment at Met1–Ala39 is disordered. Residues Ser9 to Ala39 show a composition bias toward basic and acidic residues. Residues Pro291–Leu338 enclose the F-box domain.

This sequence belongs to the FBXL17 family. Part of the SCF (SKP1-CUL1-F-box) E3 ubiquitin-protein ligase complex SCF(FBXL17). Interacts with BTB domain-containing proteins; specifically recognizes and binds a conserved degron of non-consecutive residues present at the interface of BTB dimers of aberrant composition. In terms of tissue distribution, expressed in the neuro-ectoderm of embryos.

It is found in the cytoplasm. The protein localises to the nucleus. Its function is as follows. Substrate-recognition component of the SCF(FBXL17) E3 ubiquitin ligase complex, a key component of a quality control pathway required to ensure functional dimerization of BTB domain-containing proteins (dimerization quality control, DQC). FBXL17 specifically recognizes and binds a conserved degron of non-consecutive residues present at the interface of BTB dimers of aberrant composition: aberrant BTB dimer are then ubiquitinated by the SCF(FBXL17) complex and degraded by the proteasome. The ability of the SCF(FBXL17) complex to eliminate compromised BTB dimers is required for the differentiation and survival of neural crest and neuronal cells. The polypeptide is F-box/LRR-repeat protein 17 (Xenopus laevis (African clawed frog)).